Reading from the N-terminus, the 494-residue chain is Glycerol kinase (494 aa).

Residue Thr-13 participates in ADP binding. 3 residues coordinate ATP: Thr-13, Thr-14, and Ser-15. Residue Thr-13 coordinates sn-glycerol 3-phosphate. Arg-17 provides a ligand contact to ADP. Sn-glycerol 3-phosphate-binding residues include Arg-83, Glu-84, Tyr-135, and Asp-244. Glycerol contacts are provided by Arg-83, Glu-84, Tyr-135, Asp-244, and Gln-245. Residues Thr-266 and Gly-309 each coordinate ADP. ATP-binding residues include Thr-266, Gly-309, Gln-313, and Gly-410. ADP is bound by residues Gly-410 and Asn-414.

Belongs to the FGGY kinase family.

It catalyses the reaction glycerol + ATP = sn-glycerol 3-phosphate + ADP + H(+). It participates in polyol metabolism; glycerol degradation via glycerol kinase pathway; sn-glycerol 3-phosphate from glycerol: step 1/1. Inhibited by fructose 1,6-bisphosphate (FBP). Its function is as follows. Key enzyme in the regulation of glycerol uptake and metabolism. Catalyzes the phosphorylation of glycerol to yield sn-glycerol 3-phosphate. The sequence is that of Glycerol kinase from Shewanella baltica (strain OS223).